The sequence spans 98 residues: Cystatin-A (98 aa).

Met-1 carries the N-acetylmethionine modification. The Secondary area of contact motif lies at 46–50 (QVVAG).

It belongs to the cystatin family.

It is found in the cytoplasm. In terms of biological role, this is an intracellular thiol proteinase inhibitor. The sequence is that of Cystatin-A (CSTA) from Bos taurus (Bovine).